The chain runs to 294 residues: Probable endonuclease 4 (294 aa).

His71, His111, Glu148, Asp182, His185, His217, Asp230, His232, and Glu262 together coordinate Zn(2+).

The protein belongs to the AP endonuclease 2 family. The cofactor is Zn(2+).

The enzyme catalyses Endonucleolytic cleavage to 5'-phosphooligonucleotide end-products.. Its function is as follows. Endonuclease IV plays a role in DNA repair. It cleaves phosphodiester bonds at apurinic or apyrimidinic (AP) sites, generating a 3'-hydroxyl group and a 5'-terminal sugar phosphate. This chain is Probable endonuclease 4, found in Acholeplasma laidlawii (strain PG-8A).